The primary structure comprises 368 residues: High affinity iron permease 1 (368 aa).

7 consecutive transmembrane segments (helical) span residues 8 to 28, 50 to 70, 86 to 106, 142 to 162, 173 to 193, 204 to 224, and 287 to 307; these read VPIFFILFRETTEAAIIISVL, VWIGGAAGLFICLCIGAAFIA, IWEGVFSLVAVIMITAMGLAM, AFFVLPFITVLREGLEAVVFI, SIPIAAIMGIICGCLVGFLIY, FFVFSTVVLYLVAAGLMAKGV, and SIISYCLYWLFVCCYLVFSYF. Positions 346-368 are disordered; that stretch reads DKESDEEANNHPKEKIESDAIKA. Over residues 353–368 the composition is skewed to basic and acidic residues; that stretch reads ANNHPKEKIESDAIKA.

It belongs to the oxidase-dependent Fe transporter (OFeT) (TC 9.A.10.1) family.

It localises to the cell membrane. Its function is as follows. High affinity iron permease required for iron uptake in iron-depleted environments. Required for full virulence in mice. This is High affinity iron permease 1 from Rhizopus delemar (strain RA 99-880 / ATCC MYA-4621 / FGSC 9543 / NRRL 43880) (Mucormycosis agent).